We begin with the raw amino-acid sequence, 266 residues long: Undecaprenyl-diphosphatase (266 aa).

A run of 8 helical transmembrane segments spans residues 2–22 (INIL…FLPI), 39–59 (LPII…IIYY), 86–106 (LKLI…GTFI), 112–132 (MFIL…ILML), 145–165 (ILLV…PGIS), 184–204 (AFEI…LFKY), 212–232 (MVLN…VGII), and 246–266 (LYYF…FFRI).

It belongs to the UppP family.

The protein resides in the cell inner membrane. The enzyme catalyses di-trans,octa-cis-undecaprenyl diphosphate + H2O = di-trans,octa-cis-undecaprenyl phosphate + phosphate + H(+). Functionally, catalyzes the dephosphorylation of undecaprenyl diphosphate (UPP). Confers resistance to bacitracin. The protein is Undecaprenyl-diphosphatase of Borrelia garinii subsp. bavariensis (strain ATCC BAA-2496 / DSM 23469 / PBi) (Borreliella bavariensis).